Consider the following 1409-residue polypeptide: Inositol hexakisphosphate and diphosphoinositol-pentakisphosphate kinase 1 (1409 aa).

64–65 (KK) lines the substrate pocket. ATP contacts are provided by residues Arg145, Lys198, His205, Arg224, 248–251 (EEFM), and 257–259 (DVK). A substrate-binding site is contributed by 224–225 (RK). Lys259 and Arg273 together coordinate substrate. Residues Ser275, Asp320, and 332 to 334 (DVN) each bind ATP. 337–340 (SFVK) contributes to the substrate binding site. The polyphosphoinositide-binding domain stretch occupies residues 382-453 (PTTSGTMMEL…VLDITRLLLA (72 aa)). The disordered stretch occupies residues 891–996 (GVEEEGSAPA…PTEMKQSGLG (106 aa)). Ser920 and Ser963 each carry phosphoserine. Residues 981–996 (FSSSRPPTEMKQSGLG) are compositionally biased toward polar residues. Phosphoserine is present on residues Ser1013 and Ser1049. Positions 1110 to 1119 (MHSSQASDNP) are enriched in polar residues. Residues 1110–1183 (MHSSQASDNP…PSLNSHVAEE (74 aa)) form a disordered region. Ser1121 and Ser1128 each carry phosphoserine. The segment covering 1144 to 1162 (SSGPSSTVSSAGPSSPTTV) has biased composition (low complexity). Over residues 1163-1178 (DGNSQFGFSDQPSLNS) the composition is skewed to polar residues.

Belongs to the histidine acid phosphatase family. VIP1 subfamily.

Its subcellular location is the cytoplasm. It localises to the cytosol. It is found in the cell membrane. It catalyses the reaction 1D-myo-inositol hexakisphosphate + ATP = 1-diphospho-1D-myo-inositol 2,3,4,5,6-pentakisphosphate + ADP. The catalysed reaction is 5-diphospho-1D-myo-inositol 1,2,3,4,6-pentakisphosphate + ATP + H(+) = 1,5-bis(diphospho)-1D-myo-inositol 2,3,4,6-tetrakisphosphate + ADP. Bifunctional inositol kinase that acts in concert with the IP6K kinases IP6K1, IP6K2 and IP6K3 to synthesize the diphosphate group-containing inositol pyrophosphates diphosphoinositol pentakisphosphate, PP-InsP5, and bis-diphosphoinositol tetrakisphosphate, (PP)2-InsP4. PP-InsP5 and (PP)2-InsP4, also respectively called InsP7 and InsP8, regulate a variety of cellular processes, including apoptosis, vesicle trafficking, cytoskeletal dynamics, exocytosis, insulin signaling and neutrophil activation. Phosphorylates inositol hexakisphosphate (InsP6) at position 1 to produce PP-InsP5 which is in turn phosphorylated by IP6Ks to produce (PP)2-InsP4. Alternatively, phosphorylates PP-InsP5 at position 1, produced by IP6Ks from InsP6, to produce (PP)2-InsP4. Activated when cells are exposed to hyperosmotic stress. The chain is Inositol hexakisphosphate and diphosphoinositol-pentakisphosphate kinase 1 from Pongo abelii (Sumatran orangutan).